The chain runs to 485 residues: Glutamyl-tRNA(Gln) amidotransferase subunit A (485 aa).

Active-site charge relay system residues include Lys79 and Ser154. The active-site Acyl-ester intermediate is the Ser178.

This sequence belongs to the amidase family. GatA subfamily. As to quaternary structure, heterotrimer of A, B and C subunits.

It catalyses the reaction L-glutamyl-tRNA(Gln) + L-glutamine + ATP + H2O = L-glutaminyl-tRNA(Gln) + L-glutamate + ADP + phosphate + H(+). In terms of biological role, allows the formation of correctly charged Gln-tRNA(Gln) through the transamidation of misacylated Glu-tRNA(Gln) in organisms which lack glutaminyl-tRNA synthetase. The reaction takes place in the presence of glutamine and ATP through an activated gamma-phospho-Glu-tRNA(Gln). The polypeptide is Glutamyl-tRNA(Gln) amidotransferase subunit A (Staphylococcus aureus (strain MW2)).